The sequence spans 191 residues: Elongation factor P (191 aa).

Lys-34 carries the post-translational modification N6-(3,6-diaminohexanoyl)-5-hydroxylysine.

This sequence belongs to the elongation factor P family. In terms of processing, may be beta-lysylated on the epsilon-amino group of Lys-34 by the combined action of EpmA and EpmB, and then hydroxylated on the C5 position of the same residue by EpmC (if this protein is present). Lysylation is critical for the stimulatory effect of EF-P on peptide-bond formation. The lysylation moiety may extend toward the peptidyltransferase center and stabilize the terminal 3-CCA end of the tRNA. Hydroxylation of the C5 position on Lys-34 may allow additional potential stabilizing hydrogen-bond interactions with the P-tRNA.

The protein localises to the cytoplasm. The protein operates within protein biosynthesis; polypeptide chain elongation. Involved in peptide bond synthesis. Alleviates ribosome stalling that occurs when 3 or more consecutive Pro residues or the sequence PPG is present in a protein, possibly by augmenting the peptidyl transferase activity of the ribosome. Modification of Lys-34 is required for alleviation. The polypeptide is Elongation factor P (Psychrobacter sp. (strain PRwf-1)).